The primary structure comprises 166 residues: 2-C-methyl-D-erythritol 2,4-cyclodiphosphate synthase (166 aa).

A divalent metal cation contacts are provided by aspartate 17 and histidine 19. Residues aspartate 17 to histidine 19 and histidine 43 to serine 44 contribute to the 4-CDP-2-C-methyl-D-erythritol 2-phosphate site. Histidine 51 is an a divalent metal cation binding site. 4-CDP-2-C-methyl-D-erythritol 2-phosphate contacts are provided by residues aspartate 65 to glycine 67, alanine 109 to alanine 115, and arginine 151.

It belongs to the IspF family. In terms of assembly, homotrimer. The cofactor is a divalent metal cation.

The catalysed reaction is 4-CDP-2-C-methyl-D-erythritol 2-phosphate = 2-C-methyl-D-erythritol 2,4-cyclic diphosphate + CMP. The protein operates within isoprenoid biosynthesis; isopentenyl diphosphate biosynthesis via DXP pathway; isopentenyl diphosphate from 1-deoxy-D-xylulose 5-phosphate: step 4/6. Functionally, involved in the biosynthesis of isopentenyl diphosphate (IPP) and dimethylallyl diphosphate (DMAPP), two major building blocks of isoprenoid compounds. Catalyzes the conversion of 4-diphosphocytidyl-2-C-methyl-D-erythritol 2-phosphate (CDP-ME2P) to 2-C-methyl-D-erythritol 2,4-cyclodiphosphate (ME-CPP) with a corresponding release of cytidine 5-monophosphate (CMP). The chain is 2-C-methyl-D-erythritol 2,4-cyclodiphosphate synthase from Rhodopirellula baltica (strain DSM 10527 / NCIMB 13988 / SH1).